The chain runs to 243 residues: Complement C1q tumor necrosis factor-related protein 5 (243 aa).

The first 15 residues, 1–15, serve as a signal peptide directing secretion; it reads MRPLLALLLLGLASG. A disordered region spans residues 15 to 124; sequence GSPPLDDNKI…VPPPADTPLP (110 aa). Positions 30-95 constitute a Collagen-like domain; it reads GQPGLPGTPG…AGPVGAIGPA (66 aa). A C1q domain is found at 99-238; it reads SVPPRSAFSA…GFLVYSDWHS (140 aa).

As to quaternary structure, homotrimer (via collagen-like domain). May form higher order oligomers by supercoiling of the trimers. May interact with ERFE.

The protein resides in the secreted. This chain is Complement C1q tumor necrosis factor-related protein 5 (C1qtnf5), found in Rattus norvegicus (Rat).